Reading from the N-terminus, the 694-residue chain is Elongation factor G (694 aa).

The tr-type G domain maps to 8 to 287; it reads EDYRNFGIMA…AVVEFLPAPT (280 aa). Residues 17-24, 86-90, and 140-143 contribute to the GTP site; these read AHIDAGKT, DTPGH, and NKMD.

This sequence belongs to the TRAFAC class translation factor GTPase superfamily. Classic translation factor GTPase family. EF-G/EF-2 subfamily.

It is found in the cytoplasm. In terms of biological role, catalyzes the GTP-dependent ribosomal translocation step during translation elongation. During this step, the ribosome changes from the pre-translocational (PRE) to the post-translocational (POST) state as the newly formed A-site-bound peptidyl-tRNA and P-site-bound deacylated tRNA move to the P and E sites, respectively. Catalyzes the coordinated movement of the two tRNA molecules, the mRNA and conformational changes in the ribosome. This chain is Elongation factor G, found in Brucella suis (strain ATCC 23445 / NCTC 10510).